We begin with the raw amino-acid sequence, 152 residues long: MFRGATLVNLDSKGRLSVPTRYREQLLENAAGQMVCTIDIYHPCLLLYPLPEWEIIEQKLSRLSSMNPVERRVQRLLLGHASECQMDGAGRLLIAPVLRQHAGLTKEVMLVGQFNKFELWDETTWHQQVKEDIDAEQLATGDLSERLQDLSL.

2 consecutive SpoVT-AbrB domains span residues 5 to 52 (ATLV…PLPE) and 81 to 124 (ASEC…DETT).

Belongs to the MraZ family. In terms of assembly, dodecamer.

The protein localises to the cytoplasm. Its subcellular location is the nucleoid. Functionally, negatively regulates its own expression and that of the subsequent genes in the proximal part of the division and cell wall (dcw) gene cluster. Acts by binding directly to DNA. May also regulate the expression of genes outside the dcw cluster. The polypeptide is Transcriptional regulator MraZ (Escherichia coli (strain K12)).